Reading from the N-terminus, the 320-residue chain is Cytochrome f (320 aa).

Positions 1–35 are cleaved as a signal peptide; that stretch reads MQTRNAFSWLKKQITRSISVSLMIYILTRTSISSA. Heme contacts are provided by Y36, C56, C59, and H60. The chain crosses the membrane as a helical span at residues 286-306; the sequence is AQGLLFFLASVILAQIFLVLK.

It belongs to the cytochrome f family. In terms of assembly, the 4 large subunits of the cytochrome b6-f complex are cytochrome b6, subunit IV (17 kDa polypeptide, petD), cytochrome f and the Rieske protein, while the 4 small subunits are PetG, PetL, PetM and PetN. The complex functions as a dimer. Heme serves as cofactor.

The protein localises to the plastid. Its subcellular location is the chloroplast thylakoid membrane. Functionally, component of the cytochrome b6-f complex, which mediates electron transfer between photosystem II (PSII) and photosystem I (PSI), cyclic electron flow around PSI, and state transitions. In Nicotiana tomentosiformis (Tobacco), this protein is Cytochrome f.